The chain runs to 184 residues: Small ribosomal subunit protein uS7 (184 aa).

This sequence belongs to the universal ribosomal protein uS7 family. As to quaternary structure, part of the 30S ribosomal subunit.

Functionally, one of the primary rRNA binding proteins, it binds directly to 16S rRNA where it nucleates assembly of the head domain of the 30S subunit. Is located at the subunit interface close to the decoding center. This chain is Small ribosomal subunit protein uS7, found in Thermoplasma volcanium (strain ATCC 51530 / DSM 4299 / JCM 9571 / NBRC 15438 / GSS1).